Consider the following 354-residue polypeptide: Glutamine synthetase cytosolic isozyme 1-3 (354 aa).

An N-acetylserine modification is found at Ser2. 2 positions are modified to phosphoserine: Ser2 and Ser48. Residues 19-99 (IIAEYIWIGG…VMCDAYTPAG (81 aa)) enclose the GS beta-grasp domain. The GS catalytic domain maps to 106 to 354 (KRHNAAKIFS…SMIAETTILG (249 aa)).

This sequence belongs to the glutamine synthetase family. Homooctamer. In terms of tissue distribution, expressed in the pericycle in the region of mature root.

It is found in the cytoplasm. It carries out the reaction L-glutamate + NH4(+) + ATP = L-glutamine + ADP + phosphate + H(+). In terms of biological role, low-affinity glutamine synthetase. May contribute to the homeostatic control of glutamine synthesis in roots. The sequence is that of Glutamine synthetase cytosolic isozyme 1-3 (GLN1-3) from Arabidopsis thaliana (Mouse-ear cress).